A 402-amino-acid chain; its full sequence is SH3 and cysteine-rich domain-containing protein (402 aa).

Residues M1–F47 form a disordered region. The Phorbol-ester/DAG-type zinc finger occupies A107–C159. The disordered stretch occupies residues Q211–Y247. SH3 domains are found at residues L285 to Q344 and K347 to I402.

As to quaternary structure, interacts (via SH3 domains) with CACNA1S. Interacts with CACNA1H. Interacts with CACNA1C.

The protein localises to the cytoplasm. Its subcellular location is the cytosol. It is found in the cell membrane. It localises to the sarcolemma. Functionally, promotes expression of the ion channel CACNA1H at the cell membrane, and thereby contributes to the regulation of channel activity. Plays a minor and redundant role in promoting the expression of calcium channel CACNA1S at the cell membrane, and thereby contributes to increased channel activity. Slows down the inactivation rate of the calcium channel CACNA1C. In Homo sapiens (Human), this protein is SH3 and cysteine-rich domain-containing protein (STAC).